Here is a 119-residue protein sequence, read N- to C-terminus: Basic phospholipase A2 notechis II-5 (119 aa).

7 cysteine pairs are disulfide-bonded: cysteine 11-cysteine 71, cysteine 27-cysteine 118, cysteine 29-cysteine 45, cysteine 44-cysteine 99, cysteine 51-cysteine 92, cysteine 60-cysteine 85, and cysteine 78-cysteine 90. Positions 28, 30, and 32 each coordinate Ca(2+). The active site involves histidine 48. Aspartate 49 provides a ligand contact to Ca(2+). Aspartate 93 is an active-site residue.

It belongs to the phospholipase A2 family. Group I subfamily. D49 sub-subfamily. The cofactor is Ca(2+). In terms of tissue distribution, expressed by the venom gland.

The protein resides in the secreted. The enzyme catalyses a 1,2-diacyl-sn-glycero-3-phosphocholine + H2O = a 1-acyl-sn-glycero-3-phosphocholine + a fatty acid + H(+). Its function is as follows. Snake venom phospholipase A2 (PLA2) that inhibits neuromuscular transmission by blocking acetylcholine release from the nerve termini. Notechis II-5 is less toxic than notexin but has a higher specific phospholipase activity. PLA2 catalyzes the calcium-dependent hydrolysis of the 2-acyl groups in 3-sn-phosphoglycerides. The protein is Basic phospholipase A2 notechis II-5 of Notechis scutatus scutatus (Mainland tiger snake).